A 478-amino-acid polypeptide reads, in one-letter code: Methionine aminopeptidase 2 (478 aa).

The interval 1 to 122 (MAGVEEVAAS…TDPPSVPICD (122 aa)) is disordered. At alanine 2 the chain carries N-acetylalanine. A compositionally biased stretch (basic residues) spans 36–46 (KKKRRKKKKSK). Residue serine 45 is modified to Phosphoserine. The segment covering 55-79 (EPDKESGASVDEVARQLERSALEDK) has biased composition (basic and acidic residues). Phosphoserine; alternate is present on residues serine 60 and serine 63. 2 O-linked (GlcNAc) serine; alternate glycosylation sites follow: serine 60 and serine 63. Serine 74 carries the post-translational modification Phosphoserine. The segment covering 80 to 92 (ERDEDDEDGDGDG) has biased composition (acidic residues). Over residues 97–109 (GKKKKKKKKKRGP) the composition is skewed to basic residues. Residue histidine 231 participates in substrate binding. The a divalent metal cation site is built by aspartate 251, aspartate 262, and histidine 331. Histidine 339 provides a ligand contact to substrate. A divalent metal cation is bound by residues glutamate 364 and glutamate 459.

This sequence belongs to the peptidase M24A family. Methionine aminopeptidase eukaryotic type 2 subfamily. Interacts strongly with the eIF-2 gamma-subunit EIF2S3. Binds EIF2S1 at low magnesium concentrations. It depends on Co(2+) as a cofactor. Zn(2+) is required as a cofactor. Mn(2+) serves as cofactor. The cofactor is Fe(2+). In terms of processing, contains approximately 12 O-linked N-acetylglucosamine (GlcNAc) residues. O-glycosylation is required for EIF2S1 binding.

The protein localises to the cytoplasm. The enzyme catalyses Release of N-terminal amino acids, preferentially methionine, from peptides and arylamides.. Functionally, cotranslationally removes the N-terminal methionine from nascent proteins. The N-terminal methionine is often cleaved when the second residue in the primary sequence is small and uncharged (Met-Ala-, Cys, Gly, Pro, Ser, Thr, or Val). The catalytic activity of human METAP2 toward Met-Val peptides is consistently two orders of magnitude higher than that of METAP1, suggesting that it is responsible for processing proteins containing N-terminal Met-Val and Met-Thr sequences in vivo. In terms of biological role, protects eukaryotic initiation factor EIF2S1 from translation-inhibiting phosphorylation by inhibitory kinases such as EIF2AK2/PKR and EIF2AK1/HCR. Plays a critical role in the regulation of protein synthesis. The sequence is that of Methionine aminopeptidase 2 from Homo sapiens (Human).